Here is a 478-residue protein sequence, read N- to C-terminus: Sulfate adenylyltransferase subunit 1 (478 aa).

The region spanning 24–240 (KSMLRFLTCG…VLEDIDIDAD (217 aa)) is the tr-type G domain. Positions 33 to 40 (GSVDDGKS) are G1. Residue 33 to 40 (GSVDDGKS) participates in GTP binding. Positions 91-95 (GITID) are G2. The segment at 112-115 (DTPG) is G3. GTP contacts are provided by residues 112–116 (DTPGH) and 167–170 (NKMD). Positions 167 to 170 (NKMD) are G4. The tract at residues 206 to 208 (SAL) is G5.

The protein belongs to the TRAFAC class translation factor GTPase superfamily. Classic translation factor GTPase family. CysN/NodQ subfamily. In terms of assembly, heterodimer composed of CysD, the smaller subunit, and CysN.

It catalyses the reaction sulfate + ATP + H(+) = adenosine 5'-phosphosulfate + diphosphate. The protein operates within sulfur metabolism; hydrogen sulfide biosynthesis; sulfite from sulfate: step 1/3. With CysD forms the ATP sulfurylase (ATPS) that catalyzes the adenylation of sulfate producing adenosine 5'-phosphosulfate (APS) and diphosphate, the first enzymatic step in sulfur assimilation pathway. APS synthesis involves the formation of a high-energy phosphoric-sulfuric acid anhydride bond driven by GTP hydrolysis by CysN coupled to ATP hydrolysis by CysD. The chain is Sulfate adenylyltransferase subunit 1 from Aliivibrio salmonicida (strain LFI1238) (Vibrio salmonicida (strain LFI1238)).